We begin with the raw amino-acid sequence, 406 residues long: Probable sodium/metabolite cotransporter BASS1, chloroplastic (406 aa).

The transit peptide at 1 to 64 (MPLLRRPPAA…RHLCGIPSSR (64 aa)) directs the protein to the chloroplast. 9 consecutive transmembrane segments (helical) span residues 98-118 (VGEVLSLGFPVWVASACAVAL), 123-143 (AFLWVSPMAQIVGISFTMLGM), 152-172 (LKTALLMPKELASGFLLQYSV), 187-209 (PSYYAAGLILVSCCPGGTASNIV), 217-237 (VALSVLMTAASTFAAAFLTPL), 252-272 (MGLFVSTSQVVLAPVLLGALL), 278-298 (GLVQLVSPLMPFIAVATVAVL), 315-335 (LQVVMSVCWLHASGFFFGYVL), and 376-396 (VPCAVSSVCHSVYGSLLAGIW).

It belongs to the bile acid:sodium symporter (BASS) (TC 2.A.28) family.

The protein resides in the membrane. It localises to the plastid. It is found in the chloroplast envelope. In terms of biological role, may function as sodium-coupled metabolite transporter across the chloroplast envelope. This Oryza sativa subsp. japonica (Rice) protein is Probable sodium/metabolite cotransporter BASS1, chloroplastic (BASS1).